Reading from the N-terminus, the 182-residue chain is Isopentenyl-diphosphate Delta-isomerase (182 aa).

Mn(2+)-binding residues include His25 and His32. Positions Leu30–Met164 constitute a Nudix hydrolase domain. Residue Cys67 is part of the active site. His69 serves as a coordination point for Mn(2+). Glu87 provides a ligand contact to Mg(2+). Mn(2+) is bound by residues Glu114 and Glu116. Glu116 is an active-site residue.

This sequence belongs to the IPP isomerase type 1 family. As to quaternary structure, homodimer. The cofactor is Mg(2+). Mn(2+) is required as a cofactor.

It localises to the cytoplasm. The catalysed reaction is isopentenyl diphosphate = dimethylallyl diphosphate. It participates in isoprenoid biosynthesis; dimethylallyl diphosphate biosynthesis; dimethylallyl diphosphate from isopentenyl diphosphate: step 1/1. In terms of biological role, catalyzes the 1,3-allylic rearrangement of the homoallylic substrate isopentenyl (IPP) to its highly electrophilic allylic isomer, dimethylallyl diphosphate (DMAPP). In Escherichia coli O7:K1 (strain IAI39 / ExPEC), this protein is Isopentenyl-diphosphate Delta-isomerase.